The following is a 419-amino-acid chain: Arginine biosynthesis bifunctional protein ArgJ (419 aa).

Positions 154, 180, 191, 277, 414, and 419 each coordinate substrate. The active-site Nucleophile is the Thr191.

It belongs to the ArgJ family. Heterotetramer of two alpha and two beta chains.

The protein localises to the cytoplasm. The catalysed reaction is N(2)-acetyl-L-ornithine + L-glutamate = N-acetyl-L-glutamate + L-ornithine. It carries out the reaction L-glutamate + acetyl-CoA = N-acetyl-L-glutamate + CoA + H(+). It functions in the pathway amino-acid biosynthesis; L-arginine biosynthesis; L-ornithine and N-acetyl-L-glutamate from L-glutamate and N(2)-acetyl-L-ornithine (cyclic): step 1/1. Its pathway is amino-acid biosynthesis; L-arginine biosynthesis; N(2)-acetyl-L-ornithine from L-glutamate: step 1/4. Functionally, catalyzes two activities which are involved in the cyclic version of arginine biosynthesis: the synthesis of N-acetylglutamate from glutamate and acetyl-CoA as the acetyl donor, and of ornithine by transacetylation between N(2)-acetylornithine and glutamate. The polypeptide is Arginine biosynthesis bifunctional protein ArgJ (Thermosynechococcus vestitus (strain NIES-2133 / IAM M-273 / BP-1)).